The sequence spans 238 residues: MSEVTTAEFNEEGKYLRKIRSFVLREGRLTKGQAQAIETQWPTMGLDYSPAPLDLADVFGRKADTVLEIGFGMGASLVQMAQEAPELNFIGIEVHKPGVGSCLSDAAAAGVTNLRVYHHDAMEVLEHAIADGSLTRVQLFFPDPWHKKRHHKRRIVQAEFAELIRRKLKIGGVFHMATDWENYSEHMLEVMNVASGYKNQSADGTVVPRPDHRPLTKFEARGHRLGHGVWDLMFERIA.

S-adenosyl-L-methionine is bound by residues Glu68, Glu93, Asp120, and Asp143. Asp143 is a catalytic residue. Substrate-binding positions include Lys147, Asp179, and 216-219 (TKFE).

Belongs to the class I-like SAM-binding methyltransferase superfamily. TrmB family.

The catalysed reaction is guanosine(46) in tRNA + S-adenosyl-L-methionine = N(7)-methylguanosine(46) in tRNA + S-adenosyl-L-homocysteine. The protein operates within tRNA modification; N(7)-methylguanine-tRNA biosynthesis. Functionally, catalyzes the formation of N(7)-methylguanine at position 46 (m7G46) in tRNA. This is tRNA (guanine-N(7)-)-methyltransferase from Shewanella oneidensis (strain ATCC 700550 / JCM 31522 / CIP 106686 / LMG 19005 / NCIMB 14063 / MR-1).